Here is a 410-residue protein sequence, read N- to C-terminus: Angiopoietin-related protein 4 (410 aa).

The signal sequence occupies residues Met1 to Ala23. Residues Ala79–Gln101 are disordered. Residues Lys84–Pro98 show a composition bias toward basic and acidic residues. Residues Glu104–Ala152 are a coiled coil. Asn181 carries an N-linked (GlcNAc...) asparagine glycan. The 223-residue stretch at Thr183–Glu405 folds into the Fibrinogen C-terminal domain. A disulfide bond links Cys192 and Cys220. N-linked (GlcNAc...) asparagine glycans are attached at residues Asn236 and Asn242. Cys345 and Cys358 are oxidised to a cystine.

In terms of assembly, homooligomer; disulfide-linked via Cys residues in the N-terminal part of the protein. The homooligomer undergoes proteolytic processing to release the ANGPTL4 C-terminal chain, which circulates as a monomer. The homooligomer unprocessed form is able to interact with the extracellular matrix. Post-translationally, N-glycosylated. In terms of processing, forms disulfide-linked dimers and tetramers. Cleaved into a smaller N-terminal chain and a larger chain that contains the fibrinogen C-terminal domain; both cleaved and uncleaved forms are detected in the extracellular space. The cleaved form is not present within the cell. As to expression, detected in liver and kidney. Predominantly expressed in adipose tissue and is strongly up-regulated by fasting in white adipose tissue and liver. More abundant in areas of lower flow stress in the inner curvature compared to the outer curvature regions of the aorta (at protein level).

It localises to the secreted. It is found in the extracellular space. The protein localises to the extracellular matrix. Functionally, mediates inactivation of the lipoprotein lipase LPL, and thereby plays a role in the regulation of triglyceride clearance from the blood serum and in lipid metabolism. May also play a role in regulating glucose homeostasis and insulin sensitivity. Inhibits proliferation, migration, and tubule formation of endothelial cells and reduces vascular leakage. Upon heterologous expression, inhibits the adhesion of endothelial cell to the extracellular matrix (ECM), and inhibits the reorganization of the actin cytoskeleton, formation of actin stress fibers and focal adhesions in endothelial cells that have adhered to ANGPTL4-containing ECM (in vitro). Depending on context, may modulate tumor-related angiogenesis. In terms of biological role, mediates inactivation of the lipoprotein lipase LPL, and thereby plays an important role in the regulation of triglyceride clearance from the blood serum and in lipid metabolism. Has higher activity in LPL inactivation than the uncleaved protein. This Mus musculus (Mouse) protein is Angiopoietin-related protein 4 (Angptl4).